The sequence spans 62 residues: Large ribosomal subunit protein bL28 (62 aa).

The protein belongs to the bacterial ribosomal protein bL28 family.

In Bacillus velezensis (strain DSM 23117 / BGSC 10A6 / LMG 26770 / FZB42) (Bacillus amyloliquefaciens subsp. plantarum), this protein is Large ribosomal subunit protein bL28.